Reading from the N-terminus, the 636-residue chain is Chaperone protein HtpG (636 aa).

An a; substrate-binding region spans residues 1–344; the sequence is MTLEADKQTH…SADLSLNVSR (344 aa). The b stretch occupies residues 345-561; that stretch reads EILQSGPVVD…EGDLGLQMRQ (217 aa). The tract at residues 562 to 636 is c; the sequence is LLEASGQKVP…LNKLLLELSA (75 aa).

It belongs to the heat shock protein 90 family. Homodimer.

The protein localises to the cytoplasm. In terms of biological role, molecular chaperone. Has ATPase activity. The protein is Chaperone protein HtpG of Xylella fastidiosa (strain Temecula1 / ATCC 700964).